We begin with the raw amino-acid sequence, 118 residues long: Ribonuclease P protein component (118 aa).

It belongs to the RnpA family. As to quaternary structure, consists of a catalytic RNA component (M1 or rnpB) and a protein subunit.

It carries out the reaction Endonucleolytic cleavage of RNA, removing 5'-extranucleotides from tRNA precursor.. Its function is as follows. RNaseP catalyzes the removal of the 5'-leader sequence from pre-tRNA to produce the mature 5'-terminus. It can also cleave other RNA substrates such as 4.5S RNA. The protein component plays an auxiliary but essential role in vivo by binding to the 5'-leader sequence and broadening the substrate specificity of the ribozyme. In Shewanella putrefaciens (strain CN-32 / ATCC BAA-453), this protein is Ribonuclease P protein component.